Reading from the N-terminus, the 280-residue chain is BURP domain protein USPL1 (280 aa).

The signal sequence occupies residues 1 to 24; the sequence is MASTFRLSISFLTLILFSLWVVEA. The 223-residue stretch at 58–280 folds into the BURP domain; it reads YFTLNDLKLG…PLDNIVWVTK (223 aa).

Expressed in cotyledons, radicle, floral buds, open flowers, roots and developing seeds, but not in leaves. Highly expressed in the root tips. Detected in young leaves, hypocotyls, stems and mature seed funiculum.

It is found in the protein storage vacuole. Its subcellular location is the golgi apparatus. The protein resides in the golgi stack. It localises to the trans-Golgi network. The protein localises to the prevacuolar compartment. Associated with the protein storage vacuole formation. The protein is BURP domain protein USPL1 of Arabidopsis thaliana (Mouse-ear cress).